A 352-amino-acid chain; its full sequence is Cysteinyl leukotriene receptor 1 (352 aa).

Over 1 to 43 the chain is Extracellular; it reads MYLQGTKQTFLENMNGTENLTTSLINNTCHDTIDEFRNQVYST. N-linked (GlcNAc...) asparagine glycosylation is found at asparagine 15, asparagine 19, and asparagine 26. Residues 44–64 traverse the membrane as a helical segment; sequence MYSVISVVGFFGNSFVLYVLI. At 65–72 the chain is on the cytoplasmic side; the sequence is KTYHEKSA. The helical transmembrane segment at 73–93 threads the bilayer; it reads FQVYMINLAIADLLCVCTLPL. Over 94–121 the chain is Extracellular; that stretch reads RVVYYVHKGKWLFGDFLCRLTTYALYVN. Cysteine 111 and cysteine 188 are oxidised to a cystine. The chain crosses the membrane as a helical span at residues 122–142; the sequence is LYCSIFFMTAMSFFRCVAIVF. Residues 143–156 lie on the Cytoplasmic side of the membrane; it reads PVQNINLVTQKKAR. A helical membrane pass occupies residues 157–177; it reads FVCIGIWIFVILTSSPFLMYK. The Extracellular segment spans residues 178–208; the sequence is SYQDEKNNTKCFEPPQNNQAKKYVLILHYVS. The N-linked (GlcNAc...) asparagine glycan is linked to asparagine 184. The helical transmembrane segment at 209–229 threads the bilayer; sequence LFFGFIIPFVTIIVCYTMIIL. Residues 230 to 245 lie on the Cytoplasmic side of the membrane; sequence TLLKNTMKKNMPSRRK. The chain crosses the membrane as a helical span at residues 246–266; sequence AIGMIIVVTAAFLVSFMPYHI. Residues 267-291 are Extracellular-facing; it reads QRTIHLHLLHSETRPCDSVLRMQKS. A helical membrane pass occupies residues 292-312; the sequence is VVITLSLAASNCCFDPLLYFF. The Cytoplasmic portion of the chain corresponds to 313 to 352; the sequence is SGGNFRRRLSTFRKHSLSSMTYVPKKKASLPEKGEEICNE.

The protein belongs to the G-protein coupled receptor 1 family. As to expression, widely expressed, with higher expression in the lung and skin, intermediate levels in the heart, kidney and stomach and lower levels in several other tissues. Isoform 1 is the most abundant form in all tested tissues.

The protein resides in the cell membrane. Receptor for cysteinyl leukotrienes mediating constriction of the microvascular smooth muscle during an inflammatory response. This response is mediated via a G-protein that activates a phosphatidylinositol-calcium second messenger system. The rank order of affinities for the leukotrienes is LTD4 &gt;&gt; LTE4 = LTC4 &gt;&gt; LTB4. The protein is Cysteinyl leukotriene receptor 1 (Cysltr1) of Mus musculus (Mouse).